Here is an 862-residue protein sequence, read N- to C-terminus: Chaperone protein ClpB 1 (862 aa).

Positions 5 to 147 constitute a Clp R domain; that stretch reads AEQFTEQAWA…KEAITAVRGN (143 aa). 2 repeat regions span residues 8 to 72 and 84 to 147; these read FTEQ…LQRL and LGRS…VRGN. Positions 160-341 are NBD1; the sequence is ESLAKYGRDL…RRFQQVLVDQ (182 aa). An ATP-binding site is contributed by 207-214; it reads GEPGVGKT. The segment at 342–550 is linker; that stretch reads PTVPDTISIL…IAEVIAKWTG (209 aa). Residues 392-526 adopt a coiled-coil conformation; that stretch reads IDLVDESAAR…QEDLLEDEDG (135 aa). Residues 560-771 are NBD2; that stretch reads EMEKLLQLED…RLDDQIIFRS (212 aa). ATP is bound at residue 610-617; the sequence is GPTGVGKT. The segment at 772-862 is C-terminal; sequence LEKEELRRIV…DAGDDKLSIS (91 aa).

This sequence belongs to the ClpA/ClpB family. In terms of assembly, homohexamer. The oligomerization is ATP-dependent.

Its subcellular location is the cytoplasm. Its function is as follows. Part of a stress-induced multi-chaperone system, it is involved in the recovery of the cell from heat-induced damage, in cooperation with DnaK, DnaJ and GrpE. Acts before DnaK, in the processing of protein aggregates. Protein binding stimulates the ATPase activity; ATP hydrolysis unfolds the denatured protein aggregates, which probably helps expose new hydrophobic binding sites on the surface of ClpB-bound aggregates, contributing to the solubilization and refolding of denatured protein aggregates by DnaK. This Parasynechococcus marenigrum (strain WH8102) protein is Chaperone protein ClpB 1 (clpB1).